Here is an 806-residue protein sequence, read N- to C-terminus: SH3-containing GRB2-like protein 3-interacting protein 1 (806 aa).

Disordered regions lie at residues 1–115 and 142–278; these read MMEG…ESHK and SIGN…QAAT. 2 stretches are compositionally biased toward basic and acidic residues: residues 16 to 32 and 40 to 54; these read RKKE…DRDG and PPYH…EGGK. 8 positions are modified to phosphoserine: S78, S104, S105, S107, S149, S151, S156, and S169. Phosphothreonine occurs at positions 180 and 182. 2 positions are modified to phosphoserine: S236 and F243. Residues 245–260 are compositionally biased toward pro residues; that stretch reads TGTPPPLPPKTVPATP. T247 and T259 each carry phosphothreonine. S265, D274, S287, S289, S300, S316, and S319 each carry phosphoserine. Residues 265-276 are compositionally biased toward polar residues; the sequence is SPLTVATGNDQA. Residues 315-324 are compositionally biased toward basic and acidic residues; it reads FSDASPEHVT. Positions 315 to 533 are disordered; it reads FSDASPEHVT…SRGPSPLTMG (219 aa). Phosphothreonine is present on residues T324, T328, and T335. Residues 335-345 show a composition bias toward low complexity; that stretch reads TPPAASDIPAD. Position 338 is a phosphoserine (A338). A compositionally biased stretch (pro residues) spans 346–369; that stretch reads SPAPAPPGPTGSAGPPGPPGPRHV. Residue S371 is modified to Phosphoserine. The segment covering 377–392 has biased composition (basic and acidic residues); the sequence is EVQKKVAEQTFIKDDY. S398 carries the phosphoserine modification. Phosphothreonine is present on T409. The segment covering 436–453 has biased composition (low complexity); it reads TSGASSPARPATPLVPCS. Over residues 454–473 the composition is skewed to pro residues; sequence TTPPPPPPRPPSRPKLPPGK. Composition is skewed to low complexity over residues 480–490 and 497–520; these read SRPFSPPIHSS and PLAR…TTPT. Phosphoserine is present on residues S484, S505, and G533. Residues 537–805 enclose the MHD domain; sequence TLPVAAAFTE…RFAAGKYLAD (269 aa). Interaction with DPF motifs-containing proteins stretches follow at residues 539–545, 571–573, 645–648, and 791–796; these read PVAAAFT, SFP, TYYN, and SLIKKR. The tract at residues 627–806 is necessary and sufficient to mediate interaction with CANX; the sequence is MPNLMTHLKK…FAAGKYLADN (180 aa).

In terms of assembly, interacts with proteins essential or regulating the formation of functional clathrin-coated pits. Interacts with CANX. Interacts with AP2A1. Interacts with EPS15. Interacts with SH3GL3. Interacts with AMPH. Interacts with ITSN1 (via SH3 domains). Interacts with and REPS1. In terms of tissue distribution, detected in brain, spinal cord and cerebellum.

It is found in the membrane. The protein resides in the clathrin-coated pit. May function in clathrin-mediated endocytosis. Has both a membrane binding/tubulating activity and the ability to recruit proteins essential to the formation of functional clathrin-coated pits. Has a preference for membranes enriched in phosphatidylserine and phosphoinositides and is required for the endocytosis of the transferrin receptor. May also bind tubulin. May play a role in the regulation of energy homeostasis. This Mus musculus (Mouse) protein is SH3-containing GRB2-like protein 3-interacting protein 1 (Sgip1).